The sequence spans 261 residues: Secreted RxLR effector protein 154 (261 aa).

The signal sequence occupies residues Met-1–Ser-18. The RxLR-dEER signature appears at Arg-49–Arg-64.

It belongs to the RxLR effector family.

The protein resides in the secreted. It is found in the host cell membrane. In terms of biological role, secreted effector that completely suppresses the host cell death induced by cell death-inducing proteins. This is Secreted RxLR effector protein 154 from Plasmopara viticola (Downy mildew of grapevine).